The chain runs to 130 residues: Capsid protein (130 aa).

Residues glutamate 32–isoleucine 105 form a viral RNA-binding region.

Belongs to the Leviviricetes capsid protein family. In terms of assembly, homodimer. The capsid proteins form dimers that assemble by group of 5. Twelve such pentamers are linked together with free dimers. The homodimers binds to the viral RNA via an operator hairpin, but also to many other RNA sequences in the viral genome; this interaction probably shifts the virus from the replicative to the assembly phase and ensures specific encapsidation of the viral genome.

Its subcellular location is the virion. Its function is as follows. Capsid protein self-assembles to form an icosahedral capsid with a T=3 symmetry, about 26 nm in diameter, and consisting of 89 capsid proteins dimers (178 capsid proteins). Involved in viral genome encapsidation through the interaction between a capsid protein dimer and the multiple packaging signals present in the RNA genome. The capsid also contains 1 copy of the A2 maturation protein. Acts as a translational repressor of viral replicase synthesis late in infection. This latter function is the result of capsid protein interaction with an RNA hairpin which contains the replicase ribosome-binding site. This chain is Capsid protein, found in Escherichia coli (Bacteriophage MS2).